Consider the following 311-residue polypeptide: Protein translocase subunit SecF (311 aa).

The next 6 membrane-spanning stretches (helical) occupy residues 23–42 (VSYS…ISIY), 140–160 (IEAG…YIGV), 164–184 (WYFG…ALGF), 194–214 (LSTI…SVVI), 246–266 (ILTV…GGKA), and 272–292 (VLVF…SAPI).

Belongs to the SecD/SecF family. SecF subfamily. In terms of assembly, forms a complex with SecD. Part of the essential Sec protein translocation apparatus which comprises SecA, SecYEG and auxiliary proteins SecDF-YajC and YidC.

Its subcellular location is the cell inner membrane. Functionally, part of the Sec protein translocase complex. Interacts with the SecYEG preprotein conducting channel. SecDF uses the proton motive force (PMF) to complete protein translocation after the ATP-dependent function of SecA. In Rickettsia prowazekii (strain Madrid E), this protein is Protein translocase subunit SecF.